Consider the following 324-residue polypeptide: Beta-ketoacyl-[acyl-carrier-protein] synthase III (324 aa).

Active-site residues include C111 and H251. The ACP-binding stretch occupies residues 252–256 (QANTR). Residue N281 is part of the active site.

Belongs to the thiolase-like superfamily. FabH family. In terms of assembly, homodimer.

The protein resides in the plastid. It is found in the chloroplast. It catalyses the reaction malonyl-[ACP] + acetyl-CoA + H(+) = 3-oxobutanoyl-[ACP] + CO2 + CoA. Its pathway is lipid metabolism; fatty acid biosynthesis. Functionally, catalyzes the condensation reaction of fatty acid synthesis by the addition to an acyl acceptor of two carbons from malonyl-ACP. Catalyzes the first condensation reaction which initiates fatty acid synthesis and may therefore play a role in governing the total rate of fatty acid production. Possesses both acetoacetyl-ACP synthase and acetyl transacylase activities. Its substrate specificity determines the biosynthesis of branched-chain and/or straight-chain of fatty acids. This Pyropia yezoensis (Susabi-nori) protein is Beta-ketoacyl-[acyl-carrier-protein] synthase III.